We begin with the raw amino-acid sequence, 956 residues long: Endogenous retrovirus group K member 6 Pol protein (956 aa).

One can recognise a Reverse transcriptase domain in the interval 57–245 (LEKGHIEPSF…TPFHYLGMQI (189 aa)). An LPQG motif is present at residues 161-164 (LPQG). Positions 195–198 (CIDD) match the YXDD motif. The RNase H type-1 domain maps to 460–590 (LENALTVFTD…ADLLVSSALI (131 aa)). Mg(2+) is bound by residues Asp469, Glu497, Asp517, and Asp582. The Integrase-type zinc finger occupies 587 to 628 (SALIKAQELHALTHVNAAGLKNKFDVTWKQAKDIVQHCTQCQ). Zn(2+) contacts are provided by His596, His600, Cys624, and Cys627. Residues 642–803 (RGLCPNALWQ…TSAEQHLTGK (162 aa)) enclose the Integrase catalytic domain. The integrase-type DNA-binding region spans 811-859 (KLIWWKDNKNKTWEIGKVITWGRGFACVSPGENQLPVWIPTRHLKFYNE). The interval 865 to 890 (KKSTSAETETSQSSTVDSQDEQNGDV) is disordered. Residues 869 to 879 (SAETETSQSST) are compositionally biased toward low complexity.

It belongs to the beta type-B retroviral polymerase family. HERV class-II K(HML-2) pol subfamily. Post-translationally, cleavage sites that yield the mature proteins remain to be determined.

It catalyses the reaction DNA(n) + a 2'-deoxyribonucleoside 5'-triphosphate = DNA(n+1) + diphosphate. The catalysed reaction is Endonucleolytic cleavage to 5'-phosphomonoester.. Functionally, early post-infection, the reverse transcriptase converts the viral RNA genome into double-stranded viral DNA. The RNase H domain of the reverse transcriptase performs two functions. It degrades the RNA template and specifically removes the RNA primer from the RNA/DNA hybrid. Following nuclear import, the integrase catalyzes the insertion of the linear, double-stranded viral DNA into the host cell chromosome. Endogenous Pol proteins may have kept, lost or modified their original function during evolution. In Homo sapiens (Human), this protein is Endogenous retrovirus group K member 6 Pol protein (ERVK-6).